A 349-amino-acid chain; its full sequence is Isopentenyl-diphosphate delta-isomerase (349 aa).

9–10 (RK) serves as a coordination point for substrate. FMN-binding positions include 65-67 (AMT), S95, and N124. Position 95–97 (95–97 (STH)) interacts with substrate. Q154 lines the substrate pocket. E155 contacts Mg(2+). FMN is bound by residues K186, S211, T216, 262–264 (GLR), and 283–284 (SR).

The protein belongs to the IPP isomerase type 2 family. In terms of assembly, homooctamer. Dimer of tetramers. It depends on FMN as a cofactor. The cofactor is NADPH. Requires Mg(2+) as cofactor.

It is found in the cytoplasm. It carries out the reaction isopentenyl diphosphate = dimethylallyl diphosphate. Its function is as follows. Involved in the biosynthesis of isoprenoids. Catalyzes the 1,3-allylic rearrangement of the homoallylic substrate isopentenyl (IPP) to its allylic isomer, dimethylallyl diphosphate (DMAPP). The polypeptide is Isopentenyl-diphosphate delta-isomerase (Staphylococcus aureus (strain N315)).